A 117-amino-acid chain; its full sequence is Small ribosomal subunit protein uS12c (117 aa).

The segment at 9–40 (RNARQPIENRKKSPALRGCPQRRGTITPKKPN) is disordered.

This sequence belongs to the universal ribosomal protein uS12 family. As to quaternary structure, part of the 30S ribosomal subunit.

Its subcellular location is the plastid. The protein localises to the chloroplast. Functionally, with S4 and S5 plays an important role in translational accuracy. Located at the interface of the 30S and 50S subunits. This chain is Small ribosomal subunit protein uS12c (rps12), found in Pinus koraiensis (Korean pine).